The primary structure comprises 229 residues: Demethylmenaquinone methyltransferase (229 aa).

S-adenosyl-L-methionine is bound by residues Thr58, Asp78, and 100-101 (DA).

The protein belongs to the class I-like SAM-binding methyltransferase superfamily. MenG/UbiE family.

It carries out the reaction a 2-demethylmenaquinol + S-adenosyl-L-methionine = a menaquinol + S-adenosyl-L-homocysteine + H(+). The protein operates within quinol/quinone metabolism; menaquinone biosynthesis; menaquinol from 1,4-dihydroxy-2-naphthoate: step 2/2. Methyltransferase required for the conversion of demethylmenaquinol (DMKH2) to menaquinol (MKH2). This Thermotoga maritima (strain ATCC 43589 / DSM 3109 / JCM 10099 / NBRC 100826 / MSB8) protein is Demethylmenaquinone methyltransferase.